The sequence spans 134 residues: ATP synthase epsilon chain (134 aa).

Belongs to the ATPase epsilon chain family. As to quaternary structure, F-type ATPases have 2 components, CF(1) - the catalytic core - and CF(0) - the membrane proton channel. CF(1) has five subunits: alpha(3), beta(3), gamma(1), delta(1), epsilon(1). CF(0) has three main subunits: a, b and c.

The protein resides in the cell membrane. Its function is as follows. Produces ATP from ADP in the presence of a proton gradient across the membrane. In Ruminiclostridium cellulolyticum (strain ATCC 35319 / DSM 5812 / JCM 6584 / H10) (Clostridium cellulolyticum), this protein is ATP synthase epsilon chain.